A 938-amino-acid polypeptide reads, in one-letter code: Isoleucine--tRNA ligase (938 aa).

The short motif at 58 to 68 (PYANGSIHIGH) is the 'HIGH' region element. N6-acetyllysine is present on K183. E561 is a binding site for L-isoleucyl-5'-AMP. The 'KMSKS' region motif lies at 602-606 (KMSKS). K605 is an ATP binding site. C901, C904, C921, and C924 together coordinate Zn(2+).

The protein belongs to the class-I aminoacyl-tRNA synthetase family. IleS type 1 subfamily. As to quaternary structure, monomer. Zn(2+) serves as cofactor.

The protein resides in the cytoplasm. The catalysed reaction is tRNA(Ile) + L-isoleucine + ATP = L-isoleucyl-tRNA(Ile) + AMP + diphosphate. Its function is as follows. Catalyzes the attachment of isoleucine to tRNA(Ile). As IleRS can inadvertently accommodate and process structurally similar amino acids such as valine, to avoid such errors it has two additional distinct tRNA(Ile)-dependent editing activities. One activity is designated as 'pretransfer' editing and involves the hydrolysis of activated Val-AMP. The other activity is designated 'posttransfer' editing and involves deacylation of mischarged Val-tRNA(Ile). In Escherichia fergusonii (strain ATCC 35469 / DSM 13698 / CCUG 18766 / IAM 14443 / JCM 21226 / LMG 7866 / NBRC 102419 / NCTC 12128 / CDC 0568-73), this protein is Isoleucine--tRNA ligase.